A 187-amino-acid polypeptide reads, in one-letter code: Large ribosomal subunit protein uL10 (187 aa).

The protein belongs to the universal ribosomal protein uL10 family. In terms of assembly, part of the ribosomal stalk of the 50S ribosomal subunit. The N-terminus interacts with L11 and the large rRNA to form the base of the stalk. The C-terminus forms an elongated spine to which L12 dimers bind in a sequential fashion forming a multimeric L10(L12)X complex.

Its function is as follows. Forms part of the ribosomal stalk, playing a central role in the interaction of the ribosome with GTP-bound translation factors. This is Large ribosomal subunit protein uL10 from Synechococcus sp. (strain JA-3-3Ab) (Cyanobacteria bacterium Yellowstone A-Prime).